Reading from the N-terminus, the 299-residue chain is dTDP-4-dehydrorhamnose reductase (299 aa).

NADH-binding positions include 10–12 (GQV), Asp30, 39–40 (DF), and 63–65 (AHT). 11-12 (QV) contributes to the NADPH binding site. NADPH-binding positions include 39–40 (DF), 63–65 (AHT), and Tyr102. 104 to 105 (TD) is a binding site for dTDP-beta-L-rhamnose. NADH contacts are provided by Tyr128 and Lys132. Residues Tyr128 and Lys132 each contribute to the NADPH site. Tyr128 serves as the catalytic Proton donor/acceptor. Trp153 provides a ligand contact to dTDP-beta-L-rhamnose.

It belongs to the dTDP-4-dehydrorhamnose reductase family. Homodimer. Mg(2+) serves as cofactor.

The catalysed reaction is dTDP-beta-L-rhamnose + NADP(+) = dTDP-4-dehydro-beta-L-rhamnose + NADPH + H(+). It functions in the pathway carbohydrate biosynthesis; dTDP-L-rhamnose biosynthesis. The protein operates within bacterial outer membrane biogenesis; LPS O-antigen biosynthesis. Its function is as follows. Involved in the biosynthesis of the dTDP-L-rhamnose which is an important component of lipopolysaccharide (LPS). Catalyzes the reduction of dTDP-6-deoxy-L-lyxo-4-hexulose to yield dTDP-L-rhamnose. RmlD uses NADH and NADPH nearly equally well. This is dTDP-4-dehydrorhamnose reductase (rfbD) from Salmonella typhimurium (strain LT2 / SGSC1412 / ATCC 700720).